A 434-amino-acid chain; its full sequence is V-type ATP synthase beta chain (434 aa).

Belongs to the ATPase alpha/beta chains family.

In terms of biological role, produces ATP from ADP in the presence of a proton gradient across the membrane. The V-type beta chain is a regulatory subunit. The chain is V-type ATP synthase beta chain (atpB) from Borreliella burgdorferi (strain ATCC 35210 / DSM 4680 / CIP 102532 / B31) (Borrelia burgdorferi).